The sequence spans 214 residues: MYKIGLTGGIGSGKSRVADMLAEWGASVIDADEISHALTAPGGAAMPAIAREFGPQAVAADGALDRAWMRDLVFREPAARGRLEALLHPLIGLHTEQAAAQARGLYLVFVVPLLVESGRWRGRVDRICVVDCDPATQIARVQKRSGLTEPAIRRIMAAQAARATRLEAADDVIVNDGATSPDTLRARARTLHDRWLALAGAASQPGGKAAGTPE.

The DPCK domain occupies 3–202; sequence KIGLTGGIGS…DRWLALAGAA (200 aa). 11–16 provides a ligand contact to ATP; sequence GSGKSR.

This sequence belongs to the CoaE family.

Its subcellular location is the cytoplasm. It carries out the reaction 3'-dephospho-CoA + ATP = ADP + CoA + H(+). The protein operates within cofactor biosynthesis; coenzyme A biosynthesis; CoA from (R)-pantothenate: step 5/5. Its function is as follows. Catalyzes the phosphorylation of the 3'-hydroxyl group of dephosphocoenzyme A to form coenzyme A. The sequence is that of Dephospho-CoA kinase from Bordetella bronchiseptica (strain ATCC BAA-588 / NCTC 13252 / RB50) (Alcaligenes bronchisepticus).